A 965-amino-acid chain; its full sequence is Phosphatidylethanolamine N-methyltransferase (965 aa).

The Lumenal portion of the chain corresponds to 1 to 82 (MDRGLSTGTN…SPSEPKNLSD (82 aa)). The tract at residues 34–54 (PTVTNASNGKDKAGKTFGRTP) is disordered. Residues 83-103 (LVVLTILAGHIFLLWILPSGA) form a helical membrane-spanning segment. Residues 104–106 (KIP) are Cytoplasmic-facing. The chain crosses the membrane as a helical span at residues 107–127 (VFAVIYLFWRSCYNAGIGWLL). The Lumenal segment spans residues 128–192 (HNQSHHKTLV…EYNTWLVFRR (65 aa)). A helical membrane pass occupies residues 193-213 (LVDLILMCDFASYCLFAIACS). Residues 214–220 (RHPANES) are Cytoplasmic-facing. The helical transmembrane segment at 221–241 (VLMTVIRWTSGIALVLFNLWV) threads the bilayer. Residues 242–274 (KLDAHRVVKDYAWYWGDFFYLIDQELTFDGVFE) lie on the Lumenal side of the membrane. Residues 275–295 (MAPHPMYSVGYAGYYGISLMA) form a helical membrane-spanning segment. Over 296-297 (AS) the chain is Cytoplasmic. A helical membrane pass occupies residues 298–318 (YKVLFISIIAHAAQFAFLVLV). Topologically, residues 319–394 (ENPHIDKTYN…LDLHRITDTS (76 aa)) are lumenal. Residues 326 to 368 (TYNPPPPRKRTITEHDAASQRSQSPDTPNAPSVSEENVPNATT) are disordered. The span at 344–368 (SQRSQSPDTPNAPSVSEENVPNATT) shows a compositional bias: polar residues. A helical transmembrane segment spans residues 395–415 (SILVQFLMFSLTVLTPSTPWY). Position 416 (Gln-416) is a topological domain, cytoplasmic. The chain crosses the membrane as a helical span at residues 417–437 (FLFVANAAIWRLWYSVGIGYL). Topologically, residues 438–470 (LNRQSNCKSWTRHFVKYGETPHEAWNQWKGTYH) are lumenal. The helical transmembrane segment at 471–491 (LSMVMCYASFISAVWKMYTLP) threads the bilayer. Residues 492–503 (SNWGYGLAILRH) are Cytoplasmic-facing. A helical membrane pass occupies residues 504–524 (VLGAGLISLQIWTSVSIYESL). Residues 525–559 (GEFGWFYGDFFFDESPKLTYNGIYRFLNNPERVLG) are Lumenal-facing. The helical transmembrane segment at 560–580 (LAGVWGAVLITASGTVAFLAF) threads the bilayer. The Cytoplasmic portion of the chain corresponds to 581 to 965 (LSHILSLGFI…GATTPTESKE (385 aa)).

This sequence belongs to the class VI-like SAM-binding methyltransferase superfamily. CHO2 family.

The protein resides in the endoplasmic reticulum membrane. It catalyses the reaction a 1,2-diacyl-sn-glycero-3-phosphoethanolamine + S-adenosyl-L-methionine = a 1,2-diacyl-sn-glycero-3-phospho-N-methylethanolamine + S-adenosyl-L-homocysteine + H(+). Its pathway is phospholipid metabolism; phosphatidylcholine biosynthesis. Its function is as follows. Catalyzes the first step of the methylation pathway of phosphatidylcholine biosynthesis, the SAM-dependent methylation of phosphatidylethanolamine (PE) to phosphatidylmonomethylethanolamine (PMME). The chain is Phosphatidylethanolamine N-methyltransferase from Emericella nidulans (strain FGSC A4 / ATCC 38163 / CBS 112.46 / NRRL 194 / M139) (Aspergillus nidulans).